We begin with the raw amino-acid sequence, 574 residues long: Adenine deaminase (574 aa).

The protein belongs to the metallo-dependent hydrolases superfamily. Adenine deaminase family. The cofactor is Mn(2+).

It catalyses the reaction adenine + H2O + H(+) = hypoxanthine + NH4(+). The chain is Adenine deaminase from Thermosipho africanus (strain TCF52B).